We begin with the raw amino-acid sequence, 464 residues long: E3 ubiquitin-protein ligase ITT1 (464 aa).

The TRIAD supradomain stretch occupies residues 176–455; that stretch reads SNYHCCICME…EAYSGCYGRL (280 aa). The Zn(2+) site is built by Cys-180, Cys-183, Cys-207, Cys-210, Cys-290, Cys-300, Cys-316, Cys-319, Cys-402, and Cys-405. An RING-type 1 zinc finger spans residues 180 to 236; it reads CCICMEMEKGVRMIKLPCENANVEHYLCRGCAKSYFTAMIQENRISSVRCPQCEYKE. Residues 267-338 form an IBR-type zinc finger; sequence DTELCERYEK…HAWHGYNNKC (72 aa). Residues 402 to 431 form an RING-type 2; atypical zinc finger; sequence CPKCKVVVERSEGCNKMKCEVCGTLFCFIC. Residue Cys-415 is part of the active site. Residues Cys-420, Cys-423, Cys-428, Cys-431, His-443, and Cys-451 each coordinate Zn(2+).

It belongs to the RBR family. RNF14 subfamily. Interacts with translation release factors eRF1 (SUP45) and eRF3 (SUP35) in vitro.

The enzyme catalyses [E2 ubiquitin-conjugating enzyme]-S-ubiquitinyl-L-cysteine + [acceptor protein]-L-lysine = [E2 ubiquitin-conjugating enzyme]-L-cysteine + [acceptor protein]-N(6)-ubiquitinyl-L-lysine.. It participates in protein modification; protein ubiquitination. E3 ubiquitin-protein ligase involved in translation quality control. Involved in the rescue of stalled ribosomes by promoting ubiquitination and degradation of proteins on stalled ribosomes. Specifically required to resolve RNA-protein cross-links caused by reactive aldehydes, which trigger translation stress by stalling ribosomes: acts by catalying 'Lys-6'-linked ubiquitination of RNA-protein cross-links, leading to their degradation. Interacts with the translation termination factors eRF1 (SUP45) and eRF3 (SUP35); overexpression decreases the efficiency of translation termination. The sequence is that of E3 ubiquitin-protein ligase ITT1 from Saccharomyces cerevisiae (strain ATCC 204508 / S288c) (Baker's yeast).